The chain runs to 61 residues: Large ribosomal subunit protein bL28 (61 aa).

The tract at residues 1–24 is disordered; it reads MAKDYVTGKKTTFGNKRSHSLNPT. Positions 9–23 are enriched in polar residues; sequence KKTTFGNKRSHSLNP.

The protein belongs to the bacterial ribosomal protein bL28 family.

This chain is Large ribosomal subunit protein bL28, found in Lactobacillus acidophilus (strain ATCC 700396 / NCK56 / N2 / NCFM).